The following is a 241-amino-acid chain: Anthocyanidin 3-O-glucosyltransferase 4 (241 aa).

Residues Gln-104, His-119, Trp-122, Asn-123, Ser-124, and Glu-127 each coordinate UDP-alpha-D-glucose. An anthocyanidin is bound at residue Ala-142. Positions 143 and 144 each coordinate UDP-alpha-D-glucose.

Belongs to the UDP-glycosyltransferase family. Faintly expressed in cotyledons, roots and leaves.

The enzyme catalyses an anthocyanidin + UDP-alpha-D-glucose + H(+) = an anthocyanidin 3-O-beta-D-glucoside + UDP. It participates in pigment biosynthesis; anthocyanin biosynthesis. In terms of biological role, in the presence of other necessary color factors, this glycosylation reaction allows the accumulation of anthocyanin pigments. The protein is Anthocyanidin 3-O-glucosyltransferase 4 (GT4) of Manihot esculenta (Cassava).